A 338-amino-acid polypeptide reads, in one-letter code: MNLQKFPRHPLTFGPTPIQPLKRLSQHLGGKVELYAKREDCNSGLAFGGNKTRKLEYLIPEAIAGGYDTLVSIGGIQSNQTRQVAAVAAHLGLKCVLVQENWVNYSDAVYDRVGNIEMSRILGADVRLDAAGFDIGIRPSWEQAMADVKQAGGKPFPIPAGCSEHPYGGLGFVGFAEEVRQQEKELGFRFDYIVVCSVTGSTQAGMVVGFAADGRARRVIGIDASATPEKTHAQILRIAQSTADLVELGQDITAEDVVLDTRYGGPEYGLPNEGTLEAIRLCARQEGMLTDPVYEGKSMHGMIERVRNGEFPAGSKVLYAHLGGVPALNAYSFLFRNG.

N6-(pyridoxal phosphate)lysine is present on lysine 51. Serine 78 functions as the Nucleophile in the catalytic mechanism.

Belongs to the ACC deaminase/D-cysteine desulfhydrase family. As to quaternary structure, homotrimer. Pyridoxal 5'-phosphate serves as cofactor.

The enzyme catalyses 1-aminocyclopropane-1-carboxylate + H2O = 2-oxobutanoate + NH4(+). In terms of biological role, catalyzes a cyclopropane ring-opening reaction, the irreversible conversion of 1-aminocyclopropane-1-carboxylate (ACC) to ammonia and alpha-ketobutyrate. Allows growth on ACC as a nitrogen source. This chain is 1-aminocyclopropane-1-carboxylate deaminase, found in Acidovorax ebreus (strain TPSY) (Diaphorobacter sp. (strain TPSY)).